We begin with the raw amino-acid sequence, 138 residues long: SPbeta prophage-derived uncharacterized protein YopJ (138 aa).

The sequence is that of SPbeta prophage-derived uncharacterized protein YopJ (yopJ) from Bacillus subtilis (strain 168).